The sequence spans 316 residues: Peroxisomal targeting signal 2 receptor (316 aa).

WD repeat units follow at residues 56-96 (DTRD…GGRP), 102-142 (EHTK…SLKT), 145-185 (EHRY…SLNT), 188-228 (AHDH…RPTT), 232-272 (GHTY…DPII), and 277-316 (HHTE…GQFR).

The protein belongs to the WD repeat peroxin-7 family. In terms of assembly, interacts with PEX5; interaction only takes place when PEX7 is associated with cargo proteins.

It localises to the cytoplasm. The protein resides in the cytosol. It is found in the peroxisome matrix. Receptor required for the peroxisomal import of proteins containing a C-terminal PTS2-type peroxisomal targeting signal. Specifically binds to cargo proteins containing a PTS2 peroxisomal targeting signal in the cytosol. Cargo protein-binding triggers interaction with PEX5 and formation of a ternary complex composed of PEX5 and PEX7 along with PTS2-containing cargo proteins, which is tranlocated into peroxisomes by passing through the PEX13-PEX14 docking complex. The chain is Peroxisomal targeting signal 2 receptor (pex7) from Dictyostelium discoideum (Social amoeba).